Here is a 258-residue protein sequence, read N- to C-terminus: MSVSNKLGDLASKVYENVLLEEVKKYPRPRHIGIITDGNRRYARNVGISENEGHVKGKEKVEEVVDWCMELDIRIVTFYAFSTENFRRSPEEVDFLFHLIDNAFKSLLKDERVYKNRINVKVIGNLSILPAYLRQTIHIVEETTKNFNNYQLNLAIGYGGREEILDAIKRITRDAMDGKLNIDELDEEKFRMYLYDGRIPDPDLILRTSGEERISNFLLWQSAYSELYFSDVYWPEFSKLDFLRAIYSYQRRQRRFGR.

D37 is an active-site residue. Position 37 (D37) interacts with Mg(2+). Substrate contacts are provided by residues G38–R41, H54, and S82–E84. The active-site Proton acceptor is N85. Substrate contacts are provided by residues F86, R88, R207, and R213–S215. A Mg(2+)-binding site is contributed by E226.

This sequence belongs to the UPP synthase family. Homodimer. Mg(2+) serves as cofactor.

The catalysed reaction is geranylgeranyl diphosphate + 7 isopentenyl diphosphate = tri-trans,hepta-cis-undecaprenyl diphosphate + 7 diphosphate. In terms of biological role, catalyzes the sequential condensation of isopentenyl diphosphate (IPP) with geranylgeranyl diphosphate (GGPP) to yield (2Z,6Z,10Z,14Z,18Z,22Z,26Z,30E,34E,38E)-undecaprenyl diphosphate (tritrans,heptacis-UPP). It is probably the precursor of glycosyl carrier lipids. This is Tritrans,polycis-undecaprenyl-diphosphate synthase (geranylgeranyl-diphosphate specific) from Thermoplasma acidophilum (strain ATCC 25905 / DSM 1728 / JCM 9062 / NBRC 15155 / AMRC-C165).